A 182-amino-acid chain; its full sequence is Ribulose bisphosphate carboxylase small subunit, chloroplastic (182 aa).

The transit peptide at 1–58 (MASSMLSTATVASINRVSPAQATMVAPFTGLKSTPVFPTTRKTNSDITSITSNGGKVQ) directs the protein to the chloroplast.

This sequence belongs to the RuBisCO small chain family. In terms of assembly, heterohexadecamer of 8 large and 8 small subunits.

The protein resides in the plastid. It localises to the chloroplast. In terms of biological role, ruBisCO catalyzes two reactions: the carboxylation of D-ribulose 1,5-bisphosphate, the primary event in carbon dioxide fixation, as well as the oxidative fragmentation of the pentose substrate. Both reactions occur simultaneously and in competition at the same active site. Although the small subunit is not catalytic it is essential for maximal activity. The protein is Ribulose bisphosphate carboxylase small subunit, chloroplastic of Manihot esculenta (Cassava).